A 35-amino-acid chain; its full sequence is Water stress-responsive protein 7 (35 aa).

In Pinus pinaster (Maritime pine), this protein is Water stress-responsive protein 7.